Here is a 138-residue protein sequence, read N- to C-terminus: Extracellular glycoprotein lacritin (138 aa).

An N-terminal signal peptide occupies residues 1–19; sequence MKFTTLLFLAAVAGALVYA. A disordered region spans residues 20 to 79; that stretch reads EDASSDSTGADPAQEAGTSKPNEEISGPAEPASPPETTTTAQETSAAAVQGTAKVTSSRQ. Over residues 43–67 the composition is skewed to low complexity; the sequence is EISGPAEPASPPETTTTAQETSAAA. N119 is a glycosylation site (N-linked (GlcNAc...) asparagine).

As to expression, expressed in secretory granules of many acinar cells in lacrimal gland and in scattered acinar cells of salivary glands.

The protein localises to the secreted. Its function is as follows. Modulates secretion by lacrimal acinar cells. The sequence is that of Extracellular glycoprotein lacritin (LACRT) from Homo sapiens (Human).